A 58-amino-acid chain; its full sequence is Birtoxin (58 aa).

The LCN-type CS-alpha/beta domain occupies 3 to 58 (VPGNYPLDKDGNTYKCFLLGGNEECLNVCKLHGVQYGYCYASKCWCEYLEDDKDSV). 3 cysteine pairs are disulfide-bonded: cysteine 18–cysteine 41, cysteine 27–cysteine 46, and cysteine 31–cysteine 48.

Expressed by the venom gland.

It localises to the secreted. Beta toxins bind voltage-independently at site-4 of sodium channels (Nav) and shift the voltage of activation toward more negative potentials thereby affecting sodium channel activation and promoting spontaneous and repetitive firing. Moderately toxic, but very high abundant. Does not target reptilian channels. Does not produce effect when administered to blowfly and cabbage looper larvae. In mice, produces convulsions, tremors, increased ventilation and, subsequently, death. The chain is Birtoxin from Parabuthus transvaalicus (Transvaal thick-tailed scorpion).